A 330-amino-acid polypeptide reads, in one-letter code: Ribosomal RNA small subunit methyltransferase A (330 aa).

Positions 29, 31, 56, 77, and 98 each coordinate S-adenosyl-L-methionine. A disordered region spans residues 115–158 (PVRSAGLPQAETAPKGLEPAGSSSQQGPRDWLRQTAGAAAPSRG). Residue N177 participates in S-adenosyl-L-methionine binding.

The protein belongs to the class I-like SAM-binding methyltransferase superfamily. rRNA adenine N(6)-methyltransferase family. RsmA subfamily.

It localises to the cytoplasm. The catalysed reaction is adenosine(1518)/adenosine(1519) in 16S rRNA + 4 S-adenosyl-L-methionine = N(6)-dimethyladenosine(1518)/N(6)-dimethyladenosine(1519) in 16S rRNA + 4 S-adenosyl-L-homocysteine + 4 H(+). In terms of biological role, specifically dimethylates two adjacent adenosines (A1518 and A1519) in the loop of a conserved hairpin near the 3'-end of 16S rRNA in the 30S particle. May play a critical role in biogenesis of 30S subunits. The chain is Ribosomal RNA small subunit methyltransferase A from Polaromonas sp. (strain JS666 / ATCC BAA-500).